Reading from the N-terminus, the 210-residue chain is Resolvase (210 aa).

In terms of domain architecture, Resolvase/invertase-type recombinase catalytic spans 6–150 (VARVYLRVSS…EDRRERQRQG (145 aa)). Ser14 functions as the O-(5'-phospho-DNA)-serine intermediate in the catalytic mechanism. Positions 191–210 (GVSVSQVKRVWAQNQTKDKV) form a DNA-binding region, H-T-H motif.

The protein belongs to the site-specific recombinase resolvase family.

In terms of biological role, site-specific recombination protein. The polypeptide is Resolvase (stbA) (Pseudomonas syringae pv. tomato).